The sequence spans 433 residues: Trigger factor (433 aa).

One can recognise a PPIase FKBP-type domain in the interval 161–246 (GKRVSIDFVG…VNKVEARELP (86 aa)).

This sequence belongs to the FKBP-type PPIase family. Tig subfamily.

The protein localises to the cytoplasm. The catalysed reaction is [protein]-peptidylproline (omega=180) = [protein]-peptidylproline (omega=0). Its function is as follows. Involved in protein export. Acts as a chaperone by maintaining the newly synthesized protein in an open conformation. Functions as a peptidyl-prolyl cis-trans isomerase. This chain is Trigger factor, found in Vibrio cholerae serotype O1 (strain ATCC 39541 / Classical Ogawa 395 / O395).